Consider the following 77-residue polypeptide: Large ribosomal subunit protein bL28 (77 aa).

Belongs to the bacterial ribosomal protein bL28 family.

The sequence is that of Large ribosomal subunit protein bL28 from Paracidovorax citrulli (strain AAC00-1) (Acidovorax citrulli).